A 224-amino-acid chain; its full sequence is Probable 2-phosphosulfolactate phosphatase (224 aa).

The protein belongs to the ComB family. Mg(2+) is required as a cofactor.

It catalyses the reaction (2R)-O-phospho-3-sulfolactate + H2O = (2R)-3-sulfolactate + phosphate. This chain is Probable 2-phosphosulfolactate phosphatase, found in Pseudothermotoga lettingae (strain ATCC BAA-301 / DSM 14385 / NBRC 107922 / TMO) (Thermotoga lettingae).